A 221-amino-acid polypeptide reads, in one-letter code: Large ribosomal subunit protein uL3 (221 aa).

Positions 131-165 (HNQSRGPETHGSRHHRRPGSMGPIKGKIKGKKLPG) are disordered.

It belongs to the universal ribosomal protein uL3 family. In terms of assembly, part of the 50S ribosomal subunit. Forms a cluster with proteins L14 and L19.

Functionally, one of the primary rRNA binding proteins, it binds directly near the 3'-end of the 23S rRNA, where it nucleates assembly of the 50S subunit. The polypeptide is Large ribosomal subunit protein uL3 (Phytoplasma australiense).